Here is a 400-residue protein sequence, read N- to C-terminus: Elongation factor Tu (400 aa).

In terms of domain architecture, tr-type G spans 10 to 208 (KPHVNVGTIG…AMDNYIPEPQ (199 aa)). The G1 stretch occupies residues 19–26 (GHIDHGKS). 19–26 (GHIDHGKS) is a binding site for GTP. Mg(2+) is bound at residue S26. A G2 region spans residues 60–64 (GITIN). A G3 region spans residues 81–84 (DCPG). GTP-binding positions include 81–85 (DCPGH) and 136–139 (NKTD). Residues 136–139 (NKTD) are G4. The segment at 174 to 176 (SAL) is G5.

This sequence belongs to the TRAFAC class translation factor GTPase superfamily. Classic translation factor GTPase family. EF-Tu/EF-1A subfamily. As to quaternary structure, monomer.

The protein localises to the cytoplasm. The catalysed reaction is GTP + H2O = GDP + phosphate + H(+). Its function is as follows. GTP hydrolase that promotes the GTP-dependent binding of aminoacyl-tRNA to the A-site of ribosomes during protein biosynthesis. This chain is Elongation factor Tu, found in Thermotoga petrophila (strain ATCC BAA-488 / DSM 13995 / JCM 10881 / RKU-1).